The chain runs to 422 residues: NADH-quinone oxidoreductase subunit F (422 aa).

Residues 1-26 (MLKEEDKIFTNLHGQQSHDLKSSKKR) form a disordered region. Residues 16 to 26 (QSHDLKSSKKR) show a composition bias toward basic and acidic residues. Residue 54-63 (GRGGAGFSTG) coordinates NAD(+). 166-213 (GAGAYICGEETALLESLEGKKGMPRLKPPFPAGFGLYGCPTTINNVES) contributes to the FMN binding site. Residues C344, C347, C350, and C390 each coordinate [4Fe-4S] cluster.

The protein belongs to the complex I 51 kDa subunit family. It depends on FMN as a cofactor. [4Fe-4S] cluster is required as a cofactor.

The enzyme catalyses a quinone + NADH + 5 H(+)(in) = a quinol + NAD(+) + 4 H(+)(out). Its function is as follows. NDH-1 shuttles electrons from NADH, via FMN and iron-sulfur (Fe-S) centers, to quinones in the respiratory chain. Couples the redox reaction to proton translocation (for every two electrons transferred, four hydrogen ions are translocated across the cytoplasmic membrane), and thus conserves the redox energy in a proton gradient. This is NADH-quinone oxidoreductase subunit F (nuoF) from Rickettsia felis (strain ATCC VR-1525 / URRWXCal2) (Rickettsia azadi).